We begin with the raw amino-acid sequence, 672 residues long: Acetoacetyl-CoA synthetase (672 aa).

Belongs to the ATP-dependent AMP-binding enzyme family.

It localises to the cytoplasm. The protein localises to the cytosol. It catalyses the reaction acetoacetate + ATP + CoA = acetoacetyl-CoA + AMP + diphosphate. Its function is as follows. Converts acetoacetate to acetoacetyl-CoA in the cytosol. Ketone body-utilizing enzyme, responsible for the synthesis of cholesterol and fatty acids. The polypeptide is Acetoacetyl-CoA synthetase (Aacs) (Mus musculus (Mouse)).